The following is a 308-amino-acid chain: CD276 antigen homolog (308 aa).

The first 15 residues, Met1–Ala15, serve as a signal peptide directing secretion. The Extracellular segment spans residues Ile16–Pro236. The Ig-like V-type domain maps to Pro21–Ser125. 2 disulfide bridges follow: Cys37–Cys112 and Cys155–Cys210. One can recognise an Ig-like C2-type domain in the interval Pro135 to Thr228. Residues Leu237 to Ala257 form a helical membrane-spanning segment. The Cytoplasmic segment spans residues Cys258 to Glu308. Residues Glu270–Glu308 are disordered. The segment covering Gly299–Glu308 has biased composition (acidic residues).

The protein belongs to the immunoglobulin superfamily. BTN/MOG family.

It localises to the membrane. Its function is as follows. Modulates immune responses. This is CD276 antigen homolog (cd276) from Xenopus laevis (African clawed frog).